Reading from the N-terminus, the 447-residue chain is Probable glycine dehydrogenase (decarboxylating) subunit 1 (447 aa).

The protein belongs to the GcvP family. N-terminal subunit subfamily. In terms of assembly, the glycine cleavage system is composed of four proteins: P, T, L and H. In this organism, the P 'protein' is a heterodimer of two subunits.

The catalysed reaction is N(6)-[(R)-lipoyl]-L-lysyl-[glycine-cleavage complex H protein] + glycine + H(+) = N(6)-[(R)-S(8)-aminomethyldihydrolipoyl]-L-lysyl-[glycine-cleavage complex H protein] + CO2. The glycine cleavage system catalyzes the degradation of glycine. The P protein binds the alpha-amino group of glycine through its pyridoxal phosphate cofactor; CO(2) is released and the remaining methylamine moiety is then transferred to the lipoamide cofactor of the H protein. The chain is Probable glycine dehydrogenase (decarboxylating) subunit 1 from Bacillus cereus (strain G9842).